A 173-amino-acid polypeptide reads, in one-letter code: Chorion class B protein Ld32 (173 aa).

An N-terminal signal peptide occupies residues 1–7 (FVQSALS).

The protein belongs to the chorion protein family.

This protein is one of many from the eggshell of the gypsy moth. In Lymantria dispar (Gypsy moth), this protein is Chorion class B protein Ld32.